The chain runs to 358 residues: Psilocybin cluster transcription regulator (358 aa).

Disordered stretches follow at residues 1 to 40 and 62 to 212; these read MAPA…IAGM and SGGK…RRRR. Residues 18–29 show a composition bias toward pro residues; sequence PPAPGAPAPANA. Residues 79–91 are compositionally biased toward polar residues; sequence QTLSNLAQAQPYG. The segment covering 179–190 has biased composition (low complexity); it reads PTTGRRGGRSAT. The span at 195–209 shows a compositional bias: basic and acidic residues; that stretch reads EWSRQRKDNHKEVER. The segment at 199 to 212 is basic motif; it reads QRKDNHKEVERRRR. The bHLH domain occupies 199 to 249; that stretch reads QRKDNHKEVERRRRGNINEGINELGRIVPSGSGEKAKGAILSRAVQYIHHL. The interval 213-249 is helix-loop-helix motif; the sequence is GNINEGINELGRIVPSGSGEKAKGAILSRAVQYIHHL. Residues 264 to 306 adopt a coiled-coil conformation; the sequence is KLLMDQAMGDLQAQLEEVKRLWEEERMARTRLEAELEVLRNMN. The segment at 308-358 is disordered; that stretch reads VNAGSAPASKDESAAGTKRRSTDGAEAATAATESSTANAEGERDGKRQRTE. Over residues 331-346 the composition is skewed to low complexity; the sequence is GAEAATAATESSTANA. A compositionally biased stretch (basic and acidic residues) spans 347–358; the sequence is EGERDGKRQRTE.

The protein localises to the nucleus. In terms of biological role, transcription factor that may regulate the expression of the gene cluster that mediates the biosynthesis of psilocybin, a psychotropic tryptamine-derived natural product. The chain is Psilocybin cluster transcription regulator from Psilocybe cubensis (Psychedelic mushroom).